The primary structure comprises 666 residues: Protein-arginine deiminase type-4 (666 aa).

Ca(2+) is bound by residues Asn153, Asp155, Asp165, Asp168, Asp176, and Asp179. 2 positions are modified to citrulline: Arg212 and Arg218. Gln349 is a Ca(2+) binding site. The active site involves Asp350. 4 residues coordinate Ca(2+): Glu351, Glu353, Asp369, and Ser370. Citrulline occurs at positions 372, 374, and 383. Arg374 lines the substrate pocket. 3 residues coordinate Ca(2+): Phe407, Leu410, and Glu411. Catalysis depends on residues His471, Asp473, and Cys648.

It belongs to the protein arginine deiminase family. The cofactor is Ca(2+). Post-translationally, autocitrullination at Arg-372 and Arg-374 inactivates the enzyme. In terms of tissue distribution, expressed in pluripotent embryonic stem and induced pluripotent stem cells but not multipotent neural stem cells.

It is found in the cytoplasm. The protein localises to the nucleus. It localises to the cytoplasmic granule. It carries out the reaction L-arginyl-[protein] + H2O = L-citrullyl-[protein] + NH4(+). Its activity is regulated as follows. Strongly Inhibited by F-amidine and N-alpha-benzoyl-N5-(2-chloro-1-iminoethyl)-L-ornithine amide (Cl-amidine). These inhibitors are however not specific to PADI4 and also inhibit other members of the family. In terms of biological role, catalyzes the citrullination/deimination of arginine residues of proteins such as histones, thereby playing a key role in histone code and regulation of stem cell maintenance. Citrullinates histone H1 at 'Arg-54' (to form H1R54ci), histone H3 at 'Arg-2', 'Arg-8', 'Arg-17' and/or 'Arg-26' (to form H3R2ci, H3R8ci, H3R17ci, H3R26ci, respectively) and histone H4 at 'Arg-3' (to form H4R3ci). Acts as a key regulator of stem cell maintenance by mediating citrullination of histone H1: citrullination of 'Arg-54' of histone H1 (H1R54ci) results in H1 displacement from chromatin and global chromatin decondensation, thereby promoting pluripotency and stem cell maintenance. Promotes profound chromatin decondensation during the innate immune response to infection in neutrophils by mediating formation of H1R54ci. Required for the formation of neutrophil extracellular traps (NETs); NETs are mainly composed of DNA fibers and are released by neutrophils to bind pathogens during inflammation. Citrullination of histone H3 prevents their methylation by CARM1 and HRMT1L2/PRMT1 and represses transcription. Citrullinates EP300/P300 at 'Arg-2142', which favors its interaction with NCOA2/GRIP1. The protein is Protein-arginine deiminase type-4 (Padi4) of Mus musculus (Mouse).